The chain runs to 697 residues: Elongation factor G (697 aa).

Residues 8–290 form the tr-type G domain; that stretch reads ERYRNIGISA…AVLDFLPSPV (283 aa). Residues 17 to 24, 88 to 92, and 142 to 145 each bind GTP; these read AHIDAGKT, DTPGH, and NKMD.

This sequence belongs to the TRAFAC class translation factor GTPase superfamily. Classic translation factor GTPase family. EF-G/EF-2 subfamily.

Its subcellular location is the cytoplasm. Catalyzes the GTP-dependent ribosomal translocation step during translation elongation. During this step, the ribosome changes from the pre-translocational (PRE) to the post-translocational (POST) state as the newly formed A-site-bound peptidyl-tRNA and P-site-bound deacylated tRNA move to the P and E sites, respectively. Catalyzes the coordinated movement of the two tRNA molecules, the mRNA and conformational changes in the ribosome. This chain is Elongation factor G, found in Methylobacillus flagellatus (strain ATCC 51484 / DSM 6875 / VKM B-1610 / KT).